Here is a 348-residue protein sequence, read N- to C-terminus: D-alanine--D-alanine ligase (348 aa).

Positions 132 to 334 (KRVLESIGIP…YPDLIEELVT (203 aa)) constitute an ATP-grasp domain. 162-217 (LARLTFPIFVKPANMGSSVGISKAQTKVELRKAIQLALTYDSRVLIEQGVIAREIE) lines the ATP pocket. Positions 288, 301, and 303 each coordinate Mg(2+).

This sequence belongs to the D-alanine--D-alanine ligase family. Requires Mg(2+) as cofactor. Mn(2+) serves as cofactor.

Its subcellular location is the cytoplasm. The catalysed reaction is 2 D-alanine + ATP = D-alanyl-D-alanine + ADP + phosphate + H(+). Its pathway is cell wall biogenesis; peptidoglycan biosynthesis. Its function is as follows. Cell wall formation. The polypeptide is D-alanine--D-alanine ligase (Streptococcus pyogenes serotype M4 (strain MGAS10750)).